Reading from the N-terminus, the 141-residue chain is Cystatin (141 aa).

The signal sequence occupies residues 1–26 (MVRSQLPVAAPLRLLCALLLLPSATM). Residues 29 to 129 (GGLSPRSVTD…CHFQVWSRPW (101 aa)) form the Cystatin domain. A Secondary area of contact motif is present at residues 73 to 77 (QVVSG). Intrachain disulfides connect Cys-91/Cys-107 and Cys-120/Cys-140.

The protein belongs to the cystatin family. In terms of tissue distribution, expressed at a low level by the venom gland (at protein level).

The protein localises to the secreted. In terms of biological role, inhibits various C1 cysteine proteases including cathepsin L, papain and cathepsin B. This protein has no toxic activity and its function in the venom is unknown. It may play a role as a housekeeping or regulatory protein. This is Cystatin from Micropechis ikaheca (New Guinean small-eyed snake).